The primary structure comprises 212 residues: Adenylate kinase (212 aa).

Position 10–15 (10–15) interacts with ATP; sequence GAGKGT. Positions 30-59 are NMP; sequence STGDMFRAAMANQTEMGRLAKSYIDKGELV. Residues T31, R36, 57-59, 86-89, and Q93 each bind AMP; these read ELV and GYPR. The LID stretch occupies residues 127–159; it reads GRIINRKTGETFHKVFNPPVDYKEEDYYQREDD. Residues R128 and 137-138 each bind ATP; that span reads TF. Positions 156 and 167 each coordinate AMP. Q195 contributes to the ATP binding site.

As to quaternary structure, monomer.

The protein resides in the cytoplasm. It catalyses the reaction AMP + ATP = 2 ADP. The protein operates within purine metabolism; AMP biosynthesis via salvage pathway; AMP from ADP: step 1/1. Functionally, catalyzes the reversible transfer of the terminal phosphate group between ATP and AMP. Plays an important role in cellular energy homeostasis and in adenine nucleotide metabolism. This chain is Adenylate kinase, found in Streptococcus pyogenes serotype M6 (strain ATCC BAA-946 / MGAS10394).